The chain runs to 118 residues: Large ribosomal subunit protein bL20 (118 aa).

It belongs to the bacterial ribosomal protein bL20 family.

Functionally, binds directly to 23S ribosomal RNA and is necessary for the in vitro assembly process of the 50S ribosomal subunit. It is not involved in the protein synthesizing functions of that subunit. This Staphylococcus carnosus (strain TM300) protein is Large ribosomal subunit protein bL20.